We begin with the raw amino-acid sequence, 236 residues long: Sperm flagellar protein 1 (236 aa).

Residues 7-112 (EEALHQLYLW…VLIPLRQRLE (106 aa)) form the Calponin-homology (CH) domain. The interval 118–177 (RKQGIGSLQELAPQDGTDYMDVGLSQKARGEGVPDPQGRGQLREGRLPVPRPPGDSQALQ) is disordered. Positions 183 to 236 (ILQIAEKEQELLASQETVQVLQMKVRRLEHLLQLKNVRIEDLSRRLQQAERKQR) are essential for homodimerization and microtubule bundling activity.

As to quaternary structure, homodimer. Interacts with actin, TJP1, CGN and CDH1.

The protein localises to the cytoplasm. It localises to the cell projection. It is found in the cilium. Its subcellular location is the flagellum. The protein resides in the cytoskeleton. The protein localises to the cilium axoneme. It localises to the apical cell membrane. It is found in the basolateral cell membrane. Its subcellular location is the stress fiber. The protein resides in the microvillus. The protein localises to the lamellipodium. It localises to the filopodium. Functionally, microtubule-associated protein involved in the stabilization of microtubules along the axis of migration during radial intercalation. Promotes the establishment and stabilization of an axis of microtubules required for the active migration of cells into the outer epithelium. Microtubule-associated protein that promotes microtubule bundling and stabilizes microtubules against depolymerization in response to cold shock. Essential for ciliary central apparatus formation which requires both its microtubule-binding and bundling activities and for ciliary localization of HYDIN and SPAG6 in ependymal cilia. Binds actin in intestinal epithelial cells (IECs), essential for IECs survival and contributes to formation of filopodia and lamellipodia in migrating IECs. Regulates planar cell polarity signaling pathway and asymmetric microtubule accumulation in ciliated epithelia. This is Sperm flagellar protein 1 (SPEF1) from Bos taurus (Bovine).